The following is a 1894-amino-acid chain: Plexin-A2 (1894 aa).

An N-terminal signal peptide occupies residues 1-34 (MEQRRPWPRALEVDSRSVVLLSVVWVLLAPPAAG). Positions 35 to 508 (MPQFSTFHSE…SERQVTRVPV (474 aa)) constitute a Sema domain. At 35 to 1237 (MPQFSTFHSE…VISDSLLTLP (1203 aa)) the chain is on the extracellular side. N76 and N91 each carry an N-linked (GlcNAc...) asparagine glycan. Disulfide bonds link C94–C103, C129–C137, C284–C405, C300–C356, C374–C393, C511–C528, C517–C559, C520–C537, C531–C543, and C594–C613. N327 carries an N-linked (GlcNAc...) asparagine glycan. 3 N-linked (GlcNAc...) asparagine glycosylation sites follow: N598, N696, and N756. IPT/TIG domains are found at residues 858-951 (PQIT…QYTF), 954-1037 (PSVL…QFEY), 1041-1139 (PRVQ…KFIY), and 1143-1228 (PTFE…SVSV). N1205 carries N-linked (GlcNAc...) asparagine glycosylation. A helical transmembrane segment spans residues 1238 to 1258 (AIVSIAAGGSLLLIIVIIVLI). Topologically, residues 1259–1894 (AYKRKSREND…QLINAMSIES (636 aa)) are cytoplasmic. The stretch at 1261-1310 (KRKSRENDLTLKRLQMQMDNLESRVALECKEAFAELQTDINELTSDLDRS) forms a coiled coil. S1612 carries the phosphoserine modification.

This sequence belongs to the plexin family. As to quaternary structure, homodimer. The PLXNA2 homodimer interacts with a SEMA6A homodimer, giving rise to a heterotetramer. Interacts directly with NRP1 and NRP2. Interacts with RND1. Detected in fetal brain.

The protein resides in the cell membrane. Its function is as follows. Coreceptor for SEMA3A and SEMA6A. Necessary for signaling by SEMA6A and class 3 semaphorins and subsequent remodeling of the cytoskeleton. Plays a role in axon guidance, invasive growth and cell migration. Class 3 semaphorins bind to a complex composed of a neuropilin and a plexin. The plexin modulates the affinity of the complex for specific semaphorins, and its cytoplasmic domain is required for the activation of down-stream signaling events in the cytoplasm. The chain is Plexin-A2 (PLXNA2) from Homo sapiens (Human).